We begin with the raw amino-acid sequence, 300 residues long: uncharacterized protein (300 aa).

This is an uncharacterized protein from Methanocaldococcus jannaschii (strain ATCC 43067 / DSM 2661 / JAL-1 / JCM 10045 / NBRC 100440) (Methanococcus jannaschii).